A 98-amino-acid chain; its full sequence is MPLIYMNITLAFAISLLGMLIYRSHLMSSLLCLEGMMLSLFIMSTLMALNTHSLLINIMPVVLLVFAACEAAVGLALLVSISNTYGLDHIHNLNLLQC.

3 helical membrane-spanning segments follow: residues 1 to 21, 29 to 49, and 61 to 81; these read MPLIYMNITLAFAISLLGMLI, SLLCLEGMMLSLFIMSTLMAL, and VVLLVFAACEAAVGLALLVSI.

This sequence belongs to the complex I subunit 4L family. In terms of assembly, core subunit of respiratory chain NADH dehydrogenase (Complex I) which is composed of 45 different subunits.

The protein localises to the mitochondrion inner membrane. It catalyses the reaction a ubiquinone + NADH + 5 H(+)(in) = a ubiquinol + NAD(+) + 4 H(+)(out). Core subunit of the mitochondrial membrane respiratory chain NADH dehydrogenase (Complex I) which catalyzes electron transfer from NADH through the respiratory chain, using ubiquinone as an electron acceptor. Part of the enzyme membrane arm which is embedded in the lipid bilayer and involved in proton translocation. This Hylobates lar (Lar gibbon) protein is NADH-ubiquinone oxidoreductase chain 4L (MT-ND4L).